The chain runs to 595 residues: Glutamyl-tRNA(Gln) amidotransferase subunit B, mitochondrial (595 aa).

Residues 1–72 constitute a mitochondrion transit peptide; the sequence is MPRLWYSRYL…RAKSQSRNGR (72 aa).

The protein belongs to the GatB/GatE family. GatB subfamily. In terms of assembly, subunit of the heterotrimeric GatCAB amidotransferase (AdT) complex, composed of A, B and C subunits.

The protein resides in the mitochondrion. It carries out the reaction L-glutamyl-tRNA(Gln) + L-glutamine + ATP + H2O = L-glutaminyl-tRNA(Gln) + L-glutamate + ADP + phosphate + H(+). In terms of biological role, allows the formation of correctly charged Gln-tRNA(Gln) through the transamidation of misacylated Glu-tRNA(Gln) in the mitochondria. The reaction takes place in the presence of glutamine and ATP through an activated gamma-phospho-Glu-tRNA(Gln). The chain is Glutamyl-tRNA(Gln) amidotransferase subunit B, mitochondrial from Talaromyces marneffei (strain ATCC 18224 / CBS 334.59 / QM 7333) (Penicillium marneffei).